The following is a 205-amino-acid chain: Holliday junction branch migration complex subunit RuvA (205 aa).

A domain I region spans residues 1–64 (MIGKLKGVID…EDMIRLYGFA (64 aa)). The interval 65 to 143 (TQLEREWFRL…AFAGEASGTI (79 aa)) is domain II. The tract at residues 144–152 (GLKQELGAG) is flexible linker. The segment at 153 to 205 (AAPAPVADAVSALSNLGYSRDQAANAVAAALKETGEGADSAKLIRLGLKELSQ) is domain III.

It belongs to the RuvA family. In terms of assembly, homotetramer. Forms an RuvA(8)-RuvB(12)-Holliday junction (HJ) complex. HJ DNA is sandwiched between 2 RuvA tetramers; dsDNA enters through RuvA and exits via RuvB. An RuvB hexamer assembles on each DNA strand where it exits the tetramer. Each RuvB hexamer is contacted by two RuvA subunits (via domain III) on 2 adjacent RuvB subunits; this complex drives branch migration. In the full resolvosome a probable DNA-RuvA(4)-RuvB(12)-RuvC(2) complex forms which resolves the HJ.

The protein localises to the cytoplasm. Functionally, the RuvA-RuvB-RuvC complex processes Holliday junction (HJ) DNA during genetic recombination and DNA repair, while the RuvA-RuvB complex plays an important role in the rescue of blocked DNA replication forks via replication fork reversal (RFR). RuvA specifically binds to HJ cruciform DNA, conferring on it an open structure. The RuvB hexamer acts as an ATP-dependent pump, pulling dsDNA into and through the RuvAB complex. HJ branch migration allows RuvC to scan DNA until it finds its consensus sequence, where it cleaves and resolves the cruciform DNA. In Brucella abortus (strain S19), this protein is Holliday junction branch migration complex subunit RuvA.